Here is a 750-residue protein sequence, read N- to C-terminus: Mitochondrial 15S rRNA processing factor CCM1 (750 aa).

The transit peptide at Met1 to Val82 directs the protein to the mitochondrion. 4 PPR repeats span residues Ser263–Leu297, Ser298–Met333, Gln336–Phe370, and Asn371–Pro406.

Belongs to the CCM1 family. Binds to mitochondrial small subunit 15S rRNA.

Its subcellular location is the mitochondrion. Its function is as follows. Regulates mitochondrial small subunit maturation by controlling 15S rRNA 5'-end processing. Localizes to the 5' precursor of the 15S rRNA in a position that is subsequently occupied by mS47 in the mature yeast mtSSU. Uses structure and sequence-specific RNA recognition, binding to a single-stranded region of the precursor and specifically recognizing bases -6 to -1. The exchange of Ccm1 for mS47 is coupled to the irreversible removal of precursor rRNA that is accompanied by conformational changes of the mitoribosomal proteins uS5m and mS26. These conformational changes signal completion of 5'-end rRNA processing through protection of the mature 5'-end of the 15S rRNA and stabilization of mS47. The removal of the 5' precursor together with the dissociation of Ccm1 may be catalyzed by the 5'-3' exoribonuclease Pet127. Involved in the specific removal of group I introns in mitochondrial encoded transcripts. The polypeptide is Mitochondrial 15S rRNA processing factor CCM1 (CCM1) (Clavispora lusitaniae (strain ATCC 42720) (Yeast)).